The following is a 467-amino-acid chain: Asparagine--tRNA ligase (467 aa).

Belongs to the class-II aminoacyl-tRNA synthetase family. As to quaternary structure, homodimer.

It is found in the cytoplasm. It carries out the reaction tRNA(Asn) + L-asparagine + ATP = L-asparaginyl-tRNA(Asn) + AMP + diphosphate + H(+). The polypeptide is Asparagine--tRNA ligase (Haemophilus ducreyi (strain 35000HP / ATCC 700724)).